The chain runs to 132 residues: Cell division protein FtsL (132 aa).

The Cytoplasmic portion of the chain corresponds to 1 to 50 (MAELKKMRHNHYDVPVMDEPVIASQIKKTNQKKESFQLPQKKLNKISVFE). A helical membrane pass occupies residues 51-71 (KILCILLLCSIVGIVVITIQI). The Extracellular portion of the chain corresponds to 72-132 (RTTISETMNN…EIDGNLRKVK (61 aa)).

This sequence belongs to the FtsL family.

It localises to the cell membrane. In terms of biological role, essential cell division protein. The chain is Cell division protein FtsL from Melissococcus plutonius (strain ATCC 35311 / DSM 29964 / CIP 104052 / LMG 20360 / NCIMB 702443).